We begin with the raw amino-acid sequence, 140 residues long: MLKIRNYNPSDWSPSWVRSKQPRKQRKYIINAPLHRRRKMMRSPLSKELREKLGIRNVPIKVGDVVRVERGNFRGKEGQVIDIDPKYYRVYLSLDTDRQYPFHPSKLTIIKLDLSDKKRREALKIDDSKYEELKKEGLAI.

The protein belongs to the universal ribosomal protein uL24 family. Part of the 50S ribosomal subunit.

In terms of biological role, one of two assembly initiator proteins, it binds directly to the 5'-end of the 23S rRNA, where it nucleates assembly of the 50S subunit. Its function is as follows. Located at the polypeptide exit tunnel on the outside of the subunit. This is Large ribosomal subunit protein uL24 from Nanoarchaeum equitans (strain Kin4-M).